The chain runs to 140 residues: Large-conductance mechanosensitive channel (140 aa).

Helical transmembrane passes span 16-36 (VIDLAVGVVIGAAFGKIVTAL) and 84-104 (INTVVQFVIIAFAIFLLVKLI).

This sequence belongs to the MscL family. In terms of assembly, homopentamer.

It is found in the cell inner membrane. In terms of biological role, channel that opens in response to stretch forces in the membrane lipid bilayer. May participate in the regulation of osmotic pressure changes within the cell. This Xanthomonas oryzae pv. oryzae (strain MAFF 311018) protein is Large-conductance mechanosensitive channel.